The following is a 459-amino-acid chain: UDP-N-acetylmuramoyl-tripeptide--D-alanyl-D-alanine ligase (459 aa).

ATP is bound at residue 121-127 (GSSGKTT).

Belongs to the MurCDEF family. MurF subfamily.

It localises to the cytoplasm. The catalysed reaction is D-alanyl-D-alanine + UDP-N-acetyl-alpha-D-muramoyl-L-alanyl-gamma-D-glutamyl-meso-2,6-diaminopimelate + ATP = UDP-N-acetyl-alpha-D-muramoyl-L-alanyl-gamma-D-glutamyl-meso-2,6-diaminopimeloyl-D-alanyl-D-alanine + ADP + phosphate + H(+). It functions in the pathway cell wall biogenesis; peptidoglycan biosynthesis. Involved in cell wall formation. Catalyzes the final step in the synthesis of UDP-N-acetylmuramoyl-pentapeptide, the precursor of murein. The chain is UDP-N-acetylmuramoyl-tripeptide--D-alanyl-D-alanine ligase from Treponema pallidum (strain Nichols).